Consider the following 260-residue polypeptide: MKAGRGTLGVCLAKQSQGGDPDKLACGLKKRSQKRNPSPSVVPSWTDQPVADSHGKSRATGAAASEMKHGQSKASLLHHGGFKVLQSLKGSVGRSSAPAASLGKAVALSPAPSEEQLAGMSHGIGDALGSDWPGREPRATDNRGQYLKGESWVSGRPGHPKLREVGFLRGEPPSAGPKGLGTWSELSHRYFELGQLPYAYPYYKVLPEGELRCVSLDRFNPGLSEETVEDEKTLKFFRWSADSRGVTGSAIFQISKSLMP.

2 disordered regions span residues 1–75 and 129–158; these read MKAG…SKAS and GSDW…GRPG. The span at 35 to 47 shows a compositional bias: polar residues; the sequence is RNPSPSVVPSWTD.

Interacts with transcriptional activator STAT3; the interaction occurs in both the nucleus and the cytoplasm, is enhanced by IL6 and promotes STAT3 dephosphorylation, leading to negative regulation of STAT3 transcriptional activator activity. Can interact with both unphosphorylated and phosphorylated STAT3 but interacts preferentially with phosphorylated STAT3 in the nucleus. Interacts with protein phosphatase PTPN2/TC45; this promotes interaction of PTPN2 with STAT3, leading to dephosphorylation of STAT3 by PTPN2. Expressed at high levels in the testis where it is detected within elongated spermatids during the late stages (steps 9-16) of haploid germ cell development and in the tubular lumen (at protein level).

The protein resides in the nucleus. It is found in the cytoplasm. The protein localises to the cytoplasmic vesicle. It localises to the secretory vesicle. Its subcellular location is the acrosome. In terms of biological role, promotes dephosphorylation of transcriptional activator STAT3 by interacting with both STAT3 and protein phosphatase PTPN2. This promotes interaction of PTPN2 with STAT3 and mediates STAT3 dephosphorylation by PTPN2, leading to negative regulation of STAT3 transcriptional activator activity. May be required for spermiogenesis or sperm function. The protein is Protein FAM220A of Mus musculus (Mouse).